A 397-amino-acid chain; its full sequence is Serpin B10 (397 aa).

The short motif at Lys-74–Lys-77 is the Nuclear localization signal element.

It belongs to the serpin family. Ov-serpin subfamily.

It localises to the nucleus. Its subcellular location is the cytoplasm. In terms of biological role, protease inhibitor that may play a role in the regulation of protease activities during hematopoiesis and apoptosis induced by TNF. May regulate protease activities in the cytoplasm and in the nucleus. The chain is Serpin B10 (SERPINB10) from Bos taurus (Bovine).